A 1045-amino-acid chain; its full sequence is B3 domain-containing protein REM13 (1045 aa).

The segment at residues 7–96 is a DNA-binding region (TF-B3 1); that stretch reads YPQFFHTLVP…VFHVSNLGPN (90 aa). The segment at 121 to 147 is disordered; that stretch reads NNGDVCDSEELPKEKKAKTNSEEADAV. A compositionally biased stretch (basic and acidic residues) spans 130 to 141; that stretch reads ELPKEKKAKTNS. 2 consecutive DNA-binding regions (TF-B3) follow at residues 157-253 and 305-398; these read CFMA…FCPT and FVTF…CSPE. A disordered region spans residues 423–449; sequence NRDKISNNDKEENMSWERKKDHLKSRD. A DNA-binding region (TF-B3 4) is located at residues 474 to 570; it reads SNDSCLVVVS…TPVLSLCPAD (97 aa). A disordered region spans residues 606-625; sequence IKDDNSKEKNDKEESKSVDG. 3 DNA-binding regions (TF-B3) span residues 643–738, 815–910, and 940–1035; these read FVTL…LRTE, FVTF…LRTK, and FVTL…LKFS.

The protein localises to the nucleus. The chain is B3 domain-containing protein REM13 (REM13) from Arabidopsis thaliana (Mouse-ear cress).